Here is a 241-residue protein sequence, read N- to C-terminus: Chloride intracellular channel protein 1 (241 aa).

Alanine 2 bears the N-acetylalanine mark. Residues 2 to 90 (AEEQPQVELF…EEFLEAVLCP (89 aa)) are required for insertion into the membrane. N6-acetyllysine is present on lysine 13. Cysteine 24 is a glutathione binding site. Residue cysteine 24 is modified to S-glutathionyl cysteine; alternate. Positions 24–27 (CPFS) match the G-site motif. An intrachain disulfide couples cysteine 24 to cysteine 59. Residues 26 to 46 (FSQRLFMVLWLKGVTFNVTTV) traverse the membrane as a helical segment. 2 residues coordinate glutathione: leucine 64 and threonine 77. Residues 93-233 (YPKLAALNPE…PDDEEIELAY (141 aa)) enclose the GST C-terminal domain. At lysine 119 the chain carries N6-acetyllysine. The residue at position 121 (serine 121) is a Phosphoserine. Lysine 131 is modified (N6-acetyllysine). A phosphoserine mark is found at serine 156 and serine 211. Tyrosine 233 is modified (phosphotyrosine).

It belongs to the chloride channel CLIC family. As to quaternary structure, monomer. Homodimer (in vitro). Interacts with TRAPPC2. Dimerization requires a conformation change that leads to the exposure of a large hydrophobic surface. In vivo, this may lead to membrane insertion. Interacts with AKAP9. Post-translationally, hydrogen peroxide treatment causes a conformation change, leading to dimerization and formation of an intramolecular disulfide bond between Cys-24 and Cys-59. In terms of tissue distribution, expression is prominent in heart, placenta, liver, kidney and pancreas.

Its subcellular location is the nucleus. The protein resides in the nucleus membrane. The protein localises to the cytoplasm. It is found in the cell membrane. It localises to the endoplasmic reticulum. The catalysed reaction is L-dehydroascorbate + 2 glutathione = glutathione disulfide + L-ascorbate. It catalyses the reaction chloride(in) = chloride(out). The enzyme catalyses iodide(out) = iodide(in). It carries out the reaction thiocyanate(in) = thiocyanate(out). The catalysed reaction is nitrate(in) = nitrate(out). It catalyses the reaction bromide(in) = bromide(out). The enzyme catalyses fluoride(in) = fluoride(out). Its activity is regulated as follows. The oxidoreductase activity is inhibited by rapamycin, amphotericin B and IAA-94. The channel conductance is regulated by pH and redox membrane potential. Inhibited by IAA-94. Its function is as follows. In the soluble state, catalyzes glutaredoxin-like thiol disulfide exchange reactions with reduced glutathione as electron donor. Reduces selenite and dehydroascorbate and may act as an antioxidant during oxidative stress response. Can insert into membranes and form voltage-dependent multi-ion conductive channels. Membrane insertion seems to be redox-regulated and may occur only under oxidizing conditions. Involved in regulation of the cell cycle. This chain is Chloride intracellular channel protein 1, found in Homo sapiens (Human).